We begin with the raw amino-acid sequence, 590 residues long: V-type ATP synthase alpha chain (590 aa).

Residue 234-241 (GGFGAGKT) participates in ATP binding.

The protein belongs to the ATPase alpha/beta chains family.

It catalyses the reaction ATP + H2O + 4 H(+)(in) = ADP + phosphate + 5 H(+)(out). Produces ATP from ADP in the presence of a proton gradient across the membrane. The V-type alpha chain is a catalytic subunit. The chain is V-type ATP synthase alpha chain from Halothermothrix orenii (strain H 168 / OCM 544 / DSM 9562).